The primary structure comprises 166 residues: UPF0336 protein MT0525.1 (166 aa).

The MaoC-like domain occupies 8–131 (QTLIGKHYRA…VLAEIRSEVT (124 aa)).

This sequence belongs to the UPF0336 family.

The chain is UPF0336 protein MT0525.1 from Mycobacterium tuberculosis (strain CDC 1551 / Oshkosh).